Consider the following 149-residue polypeptide: L-alanine exporter AlaE (149 aa).

Helical transmembrane passes span 16–36 (FAMV…LSGM), 46–66 (LVAI…RDLF), 85–105 (ILAY…VVGA), and 112–132 (AAVS…GYFL).

The protein belongs to the AlaE exporter family.

It localises to the cell inner membrane. In terms of biological role, exports L-alanine. The polypeptide is L-alanine exporter AlaE (Shigella flexneri).